We begin with the raw amino-acid sequence, 298 residues long: (DL)-glycerol-3-phosphatase 1, mitochondrial (298 aa).

The N-terminal 46 residues, 1–46 (MLTTPTRFVALRIPFRSSNKIPISIAPSPKVFPRKPVIRVPASLRF), are a transit peptide targeting the mitochondrion. Catalysis depends on D77, which acts as the Nucleophile. The Mg(2+) site is built by D77, D79, and D242. Catalysis depends on D79, which acts as the Proton donor.

This sequence belongs to the HAD-like hydrolase superfamily. DOG/GPP family. Mg(2+) is required as a cofactor. As to expression, ubiquitous with highest expression in siliques. Mainly restricted to the meristem of immature flower and vascular elements of the root, shoot, leave, siliqua and developing embryo (at the protein level).

It is found in the mitochondrion. The enzyme catalyses sn-glycerol 1-phosphate + H2O = glycerol + phosphate. The catalysed reaction is sn-glycerol 3-phosphate + H2O = glycerol + phosphate. It carries out the reaction 5-amino-6-(5-phospho-D-ribitylamino)uracil + H2O = 5-amino-6-(D-ribitylamino)uracil + phosphate. Functionally, acts as a glycerol-3-phosphatase with higher stereospecificity for L-glycerol-3-phosphate than DL-glycerol-3-phosphate. Can also dephosphorylate in vitro 5-amino-6-(5-phospho-D-ribitylamino)uracil, also known as ARPP. This Arabidopsis thaliana (Mouse-ear cress) protein is (DL)-glycerol-3-phosphatase 1, mitochondrial.